The sequence spans 526 residues: Protein ERGIC-53-like (526 aa).

Positions 1 to 25 (MPAVSGPGPLFCLLLLLLDPHSPET) are cleaved as a signal peptide. Residues 26-462 (GCPPLRRFEY…QPPRASSCLQ (437 aa)) are Lumenal-facing. The 222-residue stretch at 31 to 252 (RRFEYKLSFK…DVLSFLTFSL (222 aa)) folds into the L-type lectin-like domain. N-linked (GlcNAc...) asparagine glycosylation occurs at Asn75. Residues Cys176 and Cys215 are joined by a disulfide bond. Residues 463–483 (PGIFLFYLLIQTVGFFGYVHF) traverse the membrane as a helical segment. The Cytoplasmic portion of the chain corresponds to 484–526 (RQELNKSLQECLSTGSLPLGPAPHTPRALGILRRQPLPASMPA).

As to expression, highly expressed in normal and neoplastic prostate. Also expressed in cardiac atrium, salivary gland, spleen and selective cells in the CNS.

It is found in the endoplasmic reticulum-Golgi intermediate compartment membrane. This Homo sapiens (Human) protein is Protein ERGIC-53-like (LMAN1L).